The primary structure comprises 421 residues: ATP-dependent RNA helicase RhlB (421 aa).

Residues 9–37 carry the Q motif motif; sequence QKFSDFALHPKVVEALEKKGFHNCTPIQA. Positions 40 to 219 constitute a Helicase ATP-binding domain; it reads LPLTLAGRDV…FEQMNNAEYI (180 aa). 53 to 60 is an ATP binding site; that stretch reads AQTGTGKT. The DEAD box motif lies at 165 to 168; that stretch reads DEAD. One can recognise a Helicase C-terminal domain in the interval 245–390; sequence RLLQTLIEEE…VSKYNPDALM (146 aa). Residues 392 to 421 form a disordered region; the sequence is DLPKPLRLTRPRTGNGPRRTGAPRNRRRSG. The span at 402–414 shows a compositional bias: low complexity; that stretch reads PRTGNGPRRTGAP.

The protein belongs to the DEAD box helicase family. RhlB subfamily. Component of the RNA degradosome, which is a multiprotein complex involved in RNA processing and mRNA degradation.

The protein localises to the cytoplasm. It catalyses the reaction ATP + H2O = ADP + phosphate + H(+). In terms of biological role, DEAD-box RNA helicase involved in RNA degradation. Has RNA-dependent ATPase activity and unwinds double-stranded RNA. The sequence is that of ATP-dependent RNA helicase RhlB from Escherichia coli O139:H28 (strain E24377A / ETEC).